The sequence spans 1129 residues: Eukaryotic translation initiation factor 3 subunit A (1129 aa).

Residues 319–502 form the PCI domain; the sequence is LQRMAAHVLL…NSIYFGTDLT (184 aa). Disordered stretches follow at residues 590 to 633 and 836 to 1129; these read NNAR…NEIQ and AAEA…VKRR. 5 stretches are compositionally biased toward basic and acidic residues: residues 836–903, 923–964, 971–985, 994–1044, and 1053–1076; these read AAEA…RSER, DRND…KDTD, WRVR…RERG, GRDD…DQPQ, and DSPR…RDIR. Gly residues predominate over residues 1080–1091; that stretch reads PKEGGGGGGGGN. Residues 1098–1119 show a composition bias toward basic and acidic residues; it reads PRDEKPPVKRDQPQDKENKAGD.

The protein belongs to the eIF-3 subunit A family. Component of the eukaryotic translation initiation factor 3 (eIF-3) complex. The eIF-3 complex interacts with pix.

It localises to the cytoplasm. Functionally, RNA-binding component of the eukaryotic translation initiation factor 3 (eIF-3) complex, which is involved in protein synthesis of a specialized repertoire of mRNAs and, together with other initiation factors, stimulates binding of mRNA and methionyl-tRNAi to the 40S ribosome. The eIF-3 complex specifically targets and initiates translation of a subset of mRNAs involved in cell proliferation. This Drosophila mojavensis (Fruit fly) protein is Eukaryotic translation initiation factor 3 subunit A.